An 856-amino-acid polypeptide reads, in one-letter code: DNA mismatch repair protein MutS (856 aa).

Gly615 to Ser622 is a binding site for ATP. The segment covering Glu798–Lys807 has biased composition (polar residues). The tract at residues Glu798–Gln817 is disordered.

The protein belongs to the DNA mismatch repair MutS family.

Functionally, this protein is involved in the repair of mismatches in DNA. It is possible that it carries out the mismatch recognition step. This protein has a weak ATPase activity. This Photobacterium profundum (strain SS9) protein is DNA mismatch repair protein MutS.